Reading from the N-terminus, the 448-residue chain is Putative F-box/LRR-repeat protein At3g44810 (448 aa).

Positions 6-54 (TASLNCLPDELLVHVLSSLETKQAASTSVLSKRWRTLFAVRRNLDFDDS) constitute an F-box domain. LRR repeat units follow at residues 117–141 (VSELHLCLTSVTRRLHRFPSNVFRS), 143–165 (TLVKLTLGTNLFIVYFPSDTCLP), 190–213 (CPALEDLTIDQKSFPGLPNVVSSK), 228–251 (FDWFRTVALDTPNLVTLLYSTYAR), 290–313 (VRNVQMLHLTSSATEVISQCCKGG), and 421–443 (IVDSKKVQLTEDLMKLPSASSRL).

The polypeptide is Putative F-box/LRR-repeat protein At3g44810 (Arabidopsis thaliana (Mouse-ear cress)).